Here is a 163-residue protein sequence, read N- to C-terminus: Crossover junction endodeoxyribonuclease RuvC (163 aa).

Residues Asp-8, Glu-68, and Asp-140 contribute to the active site. Positions 8, 68, and 140 each coordinate Mg(2+).

The protein belongs to the RuvC family. In terms of assembly, homodimer which binds Holliday junction (HJ) DNA. The HJ becomes 2-fold symmetrical on binding to RuvC with unstacked arms; it has a different conformation from HJ DNA in complex with RuvA. In the full resolvosome a probable DNA-RuvA(4)-RuvB(12)-RuvC(2) complex forms which resolves the HJ. The cofactor is Mg(2+).

It localises to the cytoplasm. The enzyme catalyses Endonucleolytic cleavage at a junction such as a reciprocal single-stranded crossover between two homologous DNA duplexes (Holliday junction).. Functionally, the RuvA-RuvB-RuvC complex processes Holliday junction (HJ) DNA during genetic recombination and DNA repair. Endonuclease that resolves HJ intermediates. Cleaves cruciform DNA by making single-stranded nicks across the HJ at symmetrical positions within the homologous arms, yielding a 5'-phosphate and a 3'-hydroxyl group; requires a central core of homology in the junction. The consensus cleavage sequence is 5'-(A/T)TT(C/G)-3'. Cleavage occurs on the 3'-side of the TT dinucleotide at the point of strand exchange. HJ branch migration catalyzed by RuvA-RuvB allows RuvC to scan DNA until it finds its consensus sequence, where it cleaves and resolves the cruciform DNA. This Erythrobacter litoralis (strain HTCC2594) protein is Crossover junction endodeoxyribonuclease RuvC.